The following is an 828-amino-acid chain: Kinesin-associated protein 3 (828 aa).

3 ARM repeats span residues 332-372 (YVEN…NLSF), 373-411 (DTDL…HVSQ), and 577-611 (DDSC…CQIV).

In terms of assembly, heterotrimer of a 115 kDa subunit (KAP115) and two kinesin-like subunits of 95 kDa (KRP95) and 85 kDa (KRP85).

Functionally, binds to the tail domain of the KRP85/KRP95 heterodimer to form a heterotrimeric kinesin-II complex and may regulate the spindle vesicle targeting of this complex. The chain is Kinesin-associated protein 3 (KAP115) from Strongylocentrotus purpuratus (Purple sea urchin).